The chain runs to 512 residues: Bifunctional purine biosynthesis protein PurH (512 aa).

Positions 1 to 146 constitute an MGS-like domain; the sequence is MTIKRALISV…KNHQDVTVIV (146 aa).

Belongs to the PurH family.

It carries out the reaction (6R)-10-formyltetrahydrofolate + 5-amino-1-(5-phospho-beta-D-ribosyl)imidazole-4-carboxamide = 5-formamido-1-(5-phospho-D-ribosyl)imidazole-4-carboxamide + (6S)-5,6,7,8-tetrahydrofolate. The catalysed reaction is IMP + H2O = 5-formamido-1-(5-phospho-D-ribosyl)imidazole-4-carboxamide. The protein operates within purine metabolism; IMP biosynthesis via de novo pathway; 5-formamido-1-(5-phospho-D-ribosyl)imidazole-4-carboxamide from 5-amino-1-(5-phospho-D-ribosyl)imidazole-4-carboxamide (10-formyl THF route): step 1/1. It functions in the pathway purine metabolism; IMP biosynthesis via de novo pathway; IMP from 5-formamido-1-(5-phospho-D-ribosyl)imidazole-4-carboxamide: step 1/1. This Bacillus subtilis (strain 168) protein is Bifunctional purine biosynthesis protein PurH.